Reading from the N-terminus, the 513-residue chain is Catalase (513 aa).

An N-terminal signal peptide occupies residues 1-30 (MNPSLNAFRPGRLLVAASLTASLLSLSVQA). Active-site residues include His-81 and Asn-153. Residue Tyr-361 coordinates heme. The span at 391 to 407 (DGALNAGHSTSGVNYQP) shows a compositional bias: polar residues. The segment at 391 to 413 (DGALNAGHSTSGVNYQPSRLDPR) is disordered.

This sequence belongs to the catalase family. It depends on heme as a cofactor.

Its subcellular location is the periplasm. It catalyses the reaction 2 H2O2 = O2 + 2 H2O. Functionally, decomposes hydrogen peroxide into water and oxygen; serves to protect cells from the toxic effects of hydrogen peroxide. This is Catalase (katB) from Pseudomonas aeruginosa (strain ATCC 15692 / DSM 22644 / CIP 104116 / JCM 14847 / LMG 12228 / 1C / PRS 101 / PAO1).